The following is a 130-amino-acid chain: D-ribose pyranase (130 aa).

The active-site Proton donor is the His-20. Substrate is bound by residues Asp-28, His-97, and 119–121; that span reads YAN.

It belongs to the RbsD / FucU family. RbsD subfamily. As to quaternary structure, homodecamer.

It is found in the cytoplasm. The enzyme catalyses beta-D-ribopyranose = beta-D-ribofuranose. Its pathway is carbohydrate metabolism; D-ribose degradation; D-ribose 5-phosphate from beta-D-ribopyranose: step 1/2. Its function is as follows. Catalyzes the interconversion of beta-pyran and beta-furan forms of D-ribose. The polypeptide is D-ribose pyranase (Thermoanaerobacter pseudethanolicus (strain ATCC 33223 / 39E) (Clostridium thermohydrosulfuricum)).